The sequence spans 363 residues: Heat-inducible transcription repressor HrcA (363 aa).

The protein belongs to the HrcA family.

Its function is as follows. Negative regulator of class I heat shock genes (grpE-dnaK-dnaJ and groELS operons). Prevents heat-shock induction of these operons. The sequence is that of Heat-inducible transcription repressor HrcA from Rhizobium radiobacter (Agrobacterium tumefaciens).